A 312-amino-acid polypeptide reads, in one-letter code: MEDKKDALISKTISMLLDNGFAVADISGQFSASFDIIARRNIERYVLKVLYNIDTLKPTTAYQLAKVAKFLRSTATIVGEKAGGGPLEDGVIYYRHGIPISSLDTFRDYINGEKPYIYSGPGGFYVKINGEALREMRMKMSLSIGYLSHYLGVSRRSVSLYENGSSATIDVFLKLQEIIKSDLVDHTDLFKIIPDNFQEEERVDDVYIQMLLDILERIGLDTKPAYRMPFDILARDEEVVSLIASLLSEEADKTKIEIMKKISSVLEDDAFLISKHSTTRENINGCPVINIVDLEKMTSKDELLRMLEKRAR.

In terms of domain architecture, HTH cro/C1-type spans Leu-133–His-186. Residues Ile-144–Asn-163 constitute a DNA-binding region (H-T-H motif).

This is Putative HTH-type transcriptional regulatory protein Ta1363 from Thermoplasma acidophilum (strain ATCC 25905 / DSM 1728 / JCM 9062 / NBRC 15155 / AMRC-C165).